A 308-amino-acid chain; its full sequence is Putative S-adenosyl-L-methionine-dependent methyltransferase MAB_4585c (308 aa).

S-adenosyl-L-methionine contacts are provided by residues aspartate 131 and 160–161; that span reads DL.

It belongs to the UPF0677 family.

Exhibits S-adenosyl-L-methionine-dependent methyltransferase activity. The polypeptide is Putative S-adenosyl-L-methionine-dependent methyltransferase MAB_4585c (Mycobacteroides abscessus (strain ATCC 19977 / DSM 44196 / CCUG 20993 / CIP 104536 / JCM 13569 / NCTC 13031 / TMC 1543 / L948) (Mycobacterium abscessus)).